The primary structure comprises 604 residues: Sulfite reductase [NADPH] flavoprotein alpha-component (604 aa).

In terms of domain architecture, Flavodoxin-like spans V66–V204. FMN-binding positions include S72–A77, S119–G122, and L155–C164. The segment at A212–A231 is disordered. A compositionally biased stretch (low complexity) spans A216–A231. Residues A239–P453 enclose the FAD-binding FR-type domain. FAD contacts are provided by residues T327, Q361, R391–S394, T409–G411, and G424–S427. Residues S524–R525, K530–Q534, and D566 each bind NADP(+). Y604 lines the FAD pocket.

The protein belongs to the NADPH-dependent sulphite reductase flavoprotein subunit CysJ family. It in the N-terminal section; belongs to the flavodoxin family. In the C-terminal section; belongs to the flavoprotein pyridine nucleotide cytochrome reductase family. Alpha(8)-beta(8). The alpha component is a flavoprotein, the beta component is a hemoprotein. It depends on FAD as a cofactor. The cofactor is FMN.

The enzyme catalyses hydrogen sulfide + 3 NADP(+) + 3 H2O = sulfite + 3 NADPH + 4 H(+). Its pathway is sulfur metabolism; hydrogen sulfide biosynthesis; hydrogen sulfide from sulfite (NADPH route): step 1/1. Its function is as follows. Component of the sulfite reductase complex that catalyzes the 6-electron reduction of sulfite to sulfide. This is one of several activities required for the biosynthesis of L-cysteine from sulfate. The flavoprotein component catalyzes the electron flow from NADPH -&gt; FAD -&gt; FMN to the hemoprotein component. The sequence is that of Sulfite reductase [NADPH] flavoprotein alpha-component from Neisseria meningitidis serogroup C / serotype 2a (strain ATCC 700532 / DSM 15464 / FAM18).